Consider the following 197-residue polypeptide: Large ribosomal subunit protein uL18 (197 aa).

It belongs to the universal ribosomal protein uL18 family. In terms of assembly, part of the 50S ribosomal subunit. Contacts the 5S and 23S rRNAs.

Its function is as follows. This is one of the proteins that bind and probably mediate the attachment of the 5S RNA into the large ribosomal subunit, where it forms part of the central protuberance. This Sulfolobus acidocaldarius (strain ATCC 33909 / DSM 639 / JCM 8929 / NBRC 15157 / NCIMB 11770) protein is Large ribosomal subunit protein uL18.